A 357-amino-acid chain; its full sequence is Adenosine deaminase (357 aa).

Residues histidine 16 and histidine 18 each contribute to the Zn(2+) site. Residues histidine 18, aspartate 20, and glycine 185 each contribute to the substrate site. Position 212 (histidine 212) interacts with Zn(2+). Residue glutamate 215 is the Proton donor of the active site. Residue aspartate 294 coordinates Zn(2+). A substrate-binding site is contributed by aspartate 295.

This sequence belongs to the metallo-dependent hydrolases superfamily. Adenosine and AMP deaminases family. The cofactor is Zn(2+).

It is found in the cell membrane. It localises to the cell junction. Its subcellular location is the cytoplasmic vesicle lumen. The protein localises to the cytoplasm. The protein resides in the lysosome. The enzyme catalyses adenosine + H2O + H(+) = inosine + NH4(+). It catalyses the reaction 2'-deoxyadenosine + H2O + H(+) = 2'-deoxyinosine + NH4(+). Functionally, catalyzes the hydrolytic deamination of adenosine and 2-deoxyadenosine. Plays an important role in purine metabolism and in adenosine homeostasis. Modulates signaling by extracellular adenosine, and so contributes indirectly to cellular signaling events. May act as a positive regulator of T-cell coactivation. This Gallus gallus (Chicken) protein is Adenosine deaminase (ADA).